The primary structure comprises 104 residues: MKNPFEAMKQLKKLQEKMAKIEEELEQTLVEGTAGGGVVKIVMTAKEEVKEVKIDPEVVNKDEVDILEDLIAAALRDALTKAKEKSAEKMGSLTDGLPLPPGLF.

The tract at residues 84–104 (EKSAEKMGSLTDGLPLPPGLF) is disordered.

The protein belongs to the YbaB/EbfC family. In terms of assembly, homodimer.

The protein localises to the cytoplasm. The protein resides in the nucleoid. Binds to DNA and alters its conformation. May be involved in regulation of gene expression, nucleoid organization and DNA protection. The polypeptide is Nucleoid-associated protein Dtur_0258 (Dictyoglomus turgidum (strain DSM 6724 / Z-1310)).